The primary structure comprises 480 residues: MEVAPEQPRWMAHPAVLNAQHPDSHHPGLAHNYMEPAQLLPPDEVDVFFNHLDSQGNPYYANPAHARARVSYSPAHARLTGGQMCRPHLLHSPGLPWLDGGKAALSAAAAHHHSPWTVSPFSKTPLHPSAAGAPGGPLSVYPGAAGGSGGGSGSSVASLTPTAAHSGSHLFGFPPTPPKEVSPDPSTTGAASPASPSAGGSVARGEDKDGVKYQVSLSESMKMEGGSPLRPGLAPMGTQPATHHPIPTYPSYVPASAHEYGSGLFHPGGFLGGPASSFTPKQRSKARSCSEGRECVNCGATATPLWRRDGTGHYLCNACGLYHKMNGQNRPLIKPKRRLSAARRAGTCCANCQTTTTTLWRRNANGDPVCNACGLYYKLHNVNRPLTMKKEGIQTRNRKMSSKSKKSKKGAECFEELSKCMQEKSSPFSAAALAGHMAPVGHLPPFSHSGHILPTPTPIHPSSSLSFGHPHPSSMVTAMG.

Ser-73 carries the phosphoserine modification. Arg-86 bears the Asymmetric dimethylarginine mark. The disordered stretch occupies residues 166 to 208; sequence SGSHLFGFPPTPPKEVSPDPSTTGAASPASPSAGGSVARGEDK. Residues 183–201 are compositionally biased toward low complexity; the sequence is PDPSTTGAASPASPSAGGS. Ser-192 is subject to Phosphoserine. GATA-type zinc fingers lie at residues 295 to 319 and 349 to 373; these read CVNCGATATPLWRRDGTGHYLCNAC and CANCQTTTTTLWRRNANGDPVCNAC. Lys-389 is covalently cross-linked (Glycyl lysine isopeptide (Lys-Gly) (interchain with G-Cter in SUMO2)). The segment at 457–480 is disordered; that stretch reads TPIHPSSSLSFGHPHPSSMVTAMG.

In terms of assembly, interacts with BRD3. Interacts with AR and CCAR1. Interacts with MDFIC.

It localises to the nucleus. Functionally, transcriptional activator which regulates endothelin-1 gene expression in endothelial cells. Binds to the consensus sequence 5'-AGATAG-3'. Plays an important role in the regulation of phagocytosis in alveolar macrophages, particularly during P.carinii infection. The chain is Endothelial transcription factor GATA-2 from Rattus norvegicus (Rat).